We begin with the raw amino-acid sequence, 865 residues long: Cadherin-related family member 1 (865 aa).

The N-terminal stretch at 1 to 23 (MKHVRHFIPSLFLSLVHVCLVQA) is a signal peptide. Residues 24–705 (NYAPYFFDNG…TKDNPMKALG (682 aa)) are Extracellular-facing. Cadherin domains follow at residues 38–137 (NGNM…SPEF), 138–249 (INTP…PPMF), 250–356 (IGTP…PPTF), 362–475 (PQNR…VPKF), 476–579 (SSDY…SPEF), and 571–690 (DVND…GPMA). The helical transmembrane segment at 706–726 (VLAGVMGIMVLITIMISTAMF) threads the bilayer. Over 727 to 865 (WRNKRSNKIM…RNASMGEPHI (139 aa)) the chain is Cytoplasmic. The interval 782-810 (ENSNNNVQAAPVPPAAPLPPPPPALAASG) is disordered. Residues 792-805 (PVPPAAPLPPPPPA) are compositionally biased toward pro residues.

Its subcellular location is the membrane. Potential calcium-dependent cell-adhesion protein. The protein is Cadherin-related family member 1 (CDHR1) of Gallus gallus (Chicken).